We begin with the raw amino-acid sequence, 424 residues long: UDP-N-acetylglucosamine 1-carboxyvinyltransferase (424 aa).

22 to 23 (KN) provides a ligand contact to phosphoenolpyruvate. Arg-93 is a UDP-N-acetyl-alpha-D-glucosamine binding site. Cys-117 (proton donor) is an active-site residue. A 2-(S-cysteinyl)pyruvic acid O-phosphothioketal modification is found at Cys-117. UDP-N-acetyl-alpha-D-glucosamine is bound by residues 122–126 (RPVDL), 164–166 (SVG), Asp-307, and Ile-329.

Belongs to the EPSP synthase family. MurA subfamily.

The protein resides in the cytoplasm. It carries out the reaction phosphoenolpyruvate + UDP-N-acetyl-alpha-D-glucosamine = UDP-N-acetyl-3-O-(1-carboxyvinyl)-alpha-D-glucosamine + phosphate. It functions in the pathway cell wall biogenesis; peptidoglycan biosynthesis. Cell wall formation. Adds enolpyruvyl to UDP-N-acetylglucosamine. This is UDP-N-acetylglucosamine 1-carboxyvinyltransferase from Haemophilus influenzae (strain ATCC 51907 / DSM 11121 / KW20 / Rd).